Here is a 77-residue protein sequence, read N- to C-terminus: Small nuclear ribonucleoprotein G (77 aa).

A Sm domain is found at 2 to 77 (VSTPELKKYM…IISLEALDAI (76 aa)).

Belongs to the snRNP Sm proteins family. As to quaternary structure, component of the Sm core complex, present in spliceosomal snRNP U1, U2, U4/U6 and U5. The core complex contains SMB1, SMD1, SMD2, SMD3, SME1, SMX3 and SMX2 (Sm proteins B, D1, D2, D3, E, F and G, respectively), and is probably a heptameric ring structure. SMX2 specifically interacts with SME1. Belongs to the CWC complex (or CEF1-associated complex), a spliceosome sub-complex reminiscent of a late-stage spliceosome composed of the U2, U5 and U6 snRNAs and at least BUD13, BUD31, BRR2, CDC40, CEF1, CLF1, CUS1, CWC2, CWC15, CWC21, CWC22, CWC23, CWC24, CWC25, CWC27, ECM2, HSH155, IST3, ISY1, LEA1, MSL1, NTC20, PRP8, PRP9, PRP11, PRP19, PRP21, PRP22, PRP45, PRP46, SLU7, SMB1, SMD1, SMD2, SMD3, SMX2, SMX3, SNT309, SNU114, SPP2, SYF1, SYF2, RSE1 and YJU2. Component of the U4/U6-U5 tri-snRNP complex composed of the U4, U6 and U5 snRNAs and at least PRP3, PRP4, PRP6, PRP8, PRP18, PRP31, PRP38, SNU13, SNU23, SNU66, SNU114, SPP381, SMB1, SMD1, SMD2, SMD3, SMX2, SMX3, LSM2, LSM3, LSM4, LSM5, LSM6, LSM7, LSM8, BRR2 and DIB1.

Its subcellular location is the nucleus. The protein localises to the cytoplasm. Its function is as follows. Plays a role in pre-mRNA splicing as a core component of the spliceosomal U1, U2, U4 and U5 small nuclear ribonucleoproteins (snRNPs), the building blocks of the spliceosome. This chain is Small nuclear ribonucleoprotein G (SMX2), found in Saccharomyces cerevisiae (strain ATCC 204508 / S288c) (Baker's yeast).